Reading from the N-terminus, the 299-residue chain is Superkiller complex protein 8 (299 aa).

7 WD repeats span residues 11–48 (AHED…FLTE), 54–93 (KHIL…LHKT), 96–135 (SGPL…KLRS), 138–177 (NTNK…RVSE), 180–219 (AHGV…PYIA), 223–263 (GHSS…LDSS), and 266–299 (AHAD…ALKQ).

It belongs to the SKI8 family.

This is Superkiller complex protein 8 (skic8) from Dictyostelium discoideum (Social amoeba).